The primary structure comprises 638 residues: SUMO-activating enzyme subunit 2 (638 aa).

Residues 24 to 29 (GAGGIG), Asp48, 56 to 59 (NLNR), Lys72, 95 to 96 (SI), and 117 to 122 (DNRAAR) contribute to the ATP site. Zn(2+)-binding residues include Cys158 and Cys161. Residue Lys164 forms a Glycyl lysine isopeptide (Lys-Gly) (interchain with G-Cter in SUMO1) linkage. Cys173 serves as the catalytic Glycyl thioester intermediate. Residue Lys190 forms a Glycyl lysine isopeptide (Lys-Gly) (interchain with G-Cter in SUMO) linkage. The tract at residues 202–233 (ADQEVSPDRADPEAAWEPTEAEARARASNEDG) is disordered. Ser207 carries the phosphoserine modification. Residues 222–233 (AEARARASNEDG) are compositionally biased toward basic and acidic residues. Residue Lys236 forms a Glycyl lysine isopeptide (Lys-Gly) (interchain with G-Cter in SUMO1); alternate linkage. Glycyl lysine isopeptide (Lys-Gly) (interchain with G-Cter in SUMO2); alternate cross-links involve residues Lys236 and Lys257. Glycyl lysine isopeptide (Lys-Gly) (interchain with G-Cter in SUMO); alternate cross-links involve residues Lys257 and Lys271. Lys271 is subject to N6-acetyllysine; alternate. Lys275 is covalently cross-linked (Glycyl lysine isopeptide (Lys-Gly) (interchain with G-Cter in SUMO)). A Glycyl lysine isopeptide (Lys-Gly) (interchain with G-Cter in SUMO2) cross-link involves residue Lys369. Residue Lys418 forms a Glycyl lysine isopeptide (Lys-Gly) (interchain with G-Cter in SUMO1); alternate linkage. Lys418 participates in a covalent cross-link: Glycyl lysine isopeptide (Lys-Gly) (interchain with G-Cter in SUMO2); alternate. Zn(2+) is bound by residues Cys439 and Cys442. Ser505 carries the phosphoserine modification. Lys538 is covalently cross-linked (Glycyl lysine isopeptide (Lys-Gly) (interchain with G-Cter in SUMO2)). Ser548 and Ser590 each carry phosphoserine. Positions 548-561 (SPEKVGPKQAEDAA) are enriched in basic and acidic residues. The segment at 548-638 (SPEKVGPKQA…EDPDDVIALD (91 aa)) is disordered. The segment covering 581–594 (EQDDVLIVDSDEEG) has biased composition (acidic residues). Basic and acidic residues predominate over residues 603-614 (GDDKARKRKLEE). Lys609 is covalently cross-linked (Glycyl lysine isopeptide (Lys-Gly) (interchain with G-Cter in SUMO)). A Glycyl lysine isopeptide (Lys-Gly) (interchain with G-Cter in SUMO); alternate cross-link involves residue Lys611. N6-acetyllysine; alternate is present on Lys611. Residue Lys621 forms a Glycyl lysine isopeptide (Lys-Gly) (interchain with G-Cter in SUMO) linkage. The segment covering 628 to 638 (MEDPDDVIALD) has biased composition (acidic residues).

It belongs to the ubiquitin-activating E1 family. Heterodimer of SAE1 and UBA2/SAE2. The heterodimer corresponds to the two domains that are encoded on a single polypeptide chain in ubiquitin-activating enzyme E1. Interacts with UBE2I. Post-translationally, sumoylated with SUMO1 and SUMO2/3 and by UBC9. Sumoylation at Lys-236 inhibits enzymatic activity. Sumoylation at the C-terminal lysine cluster plays an essential role in nuclear trafficking. As to expression, broadly expressed, with highest levels in testis.

Its subcellular location is the cytoplasm. It localises to the nucleus. Its pathway is protein modification; protein sumoylation. Its function is as follows. The heterodimer acts as an E1 ligase for SUMO1, SUMO2, SUMO3, and probably SUMO4. It mediates ATP-dependent activation of SUMO proteins followed by formation of a thioester bond between a SUMO protein and a conserved active site cysteine residue on UBA2/SAE2. The chain is SUMO-activating enzyme subunit 2 (Uba2) from Mus musculus (Mouse).